We begin with the raw amino-acid sequence, 149 residues long: Protein AIM7 (149 aa).

The residue at position 2 (Ser-2) is an N-acetylserine. The ADF-H domain maps to 3–147 (NLYKIGTETR…DVEELREQLE (145 aa)). Ser-137 carries the phosphoserine modification.

This sequence belongs to the actin-binding proteins ADF family. GMF subfamily.

The protein localises to the cytoplasm. The protein resides in the nucleus. In terms of biological role, may be involved in mitochondrial organization and biogenesis. The sequence is that of Protein AIM7 (AIM7) from Saccharomyces cerevisiae (strain ATCC 204508 / S288c) (Baker's yeast).